Consider the following 195-residue polypeptide: Small ribosomal subunit protein eS7 (195 aa).

Residues T146 and T151 each carry the phosphothreonine modification. S172 and S173 each carry phosphoserine.

This sequence belongs to the eukaryotic ribosomal protein eS7 family. Component of the small ribosomal subunit (SSU). Mature yeast ribosomes consist of a small (40S) and a large (60S) subunit. The 40S small subunit contains 1 molecule of ribosomal RNA (18S rRNA) and at least 33 different proteins. The large 60S subunit contains 3 rRNA molecules (25S, 5.8S and 5S rRNA) and at least 46 different proteins. Interacts with snoRNA U3. uS11 interacts with MPP10. Component of the ribosomal small subunit (SSU) processome composed of at least 40 protein subunits and snoRNA U3.

The protein localises to the cytoplasm. It is found in the nucleus. Its subcellular location is the nucleolus. In terms of biological role, component of the ribosome, a large ribonucleoprotein complex responsible for the synthesis of proteins in the cell. The small ribosomal subunit (SSU) binds messenger RNAs (mRNAs) and translates the encoded message by selecting cognate aminoacyl-transfer RNA (tRNA) molecules. The large subunit (LSU) contains the ribosomal catalytic site termed the peptidyl transferase center (PTC), which catalyzes the formation of peptide bonds, thereby polymerizing the amino acids delivered by tRNAs into a polypeptide chain. The nascent polypeptides leave the ribosome through a tunnel in the LSU and interact with protein factors that function in enzymatic processing, targeting, and the membrane insertion of nascent chains at the exit of the ribosomal tunnel. eS7 is involved in nucleolar processing of pre-18S ribosomal RNA and ribosome assembly. The polypeptide is Small ribosomal subunit protein eS7 (rps7) (Schizosaccharomyces pombe (strain 972 / ATCC 24843) (Fission yeast)).